The primary structure comprises 565 residues: Calcium-dependent protein kinase 21 (565 aa).

The N-myristoyl glycine moiety is linked to residue Gly2. The disordered stretch occupies residues 28-55; that stretch reads PVPDAEAASPRKDGVDGDGDDVRGGGGG. Residues 36 to 50 show a composition bias toward basic and acidic residues; sequence SPRKDGVDGDGDDVR. Residues 77-358 enclose the Protein kinase domain; that stretch reads YVLGKELGRG…AKQVLEHPWL (282 aa). ATP-binding positions include 83 to 91 and Lys106; that span reads LGRGEFGVT. The Proton acceptor role is filled by Asp224. An autoinhibitory domain region spans residues 364–394; the sequence is APNVSLGDAVRARLQQFSAMNKFKKKALGVV. 4 EF-hand domains span residues 401–436, 437–472, 473–500, and 504–539; these read EEVD…NGQP, VPEP…LKKM, SNDE…ELRE, and PNEQ…GADW. Ca(2+) is bound by residues Asp414, Asp416, Asn418, His420, Glu425, Asp450, Asp452, Asn454, Thr456, Glu461, Asp486, Asp488, Ser490, Glu497, Asp517, Asp519, Asp521, Arg523, and Glu528.

This sequence belongs to the protein kinase superfamily. Ser/Thr protein kinase family. CDPK subfamily. As to expression, expressed in spikelets and developing seeds.

The protein resides in the membrane. The catalysed reaction is L-seryl-[protein] + ATP = O-phospho-L-seryl-[protein] + ADP + H(+). It catalyses the reaction L-threonyl-[protein] + ATP = O-phospho-L-threonyl-[protein] + ADP + H(+). Its activity is regulated as follows. Activated by calcium. Autophosphorylation may play an important role in the regulation of the kinase activity. Its function is as follows. May play a role in signal transduction pathways that involve calcium as a second messenger. Functions in signal transduction pathways that positively regulate responses to abscisic acid (ABA) and salt stress. In Oryza sativa subsp. japonica (Rice), this protein is Calcium-dependent protein kinase 21.